A 149-amino-acid polypeptide reads, in one-letter code: Transcriptional repressor NrdR (149 aa).

A zinc finger spans residues 3-34 (CPFCSENDTKVIDSRLVADGHQVRRRRQCLAC). In terms of domain architecture, ATP-cone spans 49-139 (PKVIKSNGNR…VYRSFEDIRE (91 aa)).

Belongs to the NrdR family. Zn(2+) is required as a cofactor.

Negatively regulates transcription of bacterial ribonucleotide reductase nrd genes and operons by binding to NrdR-boxes. This chain is Transcriptional repressor NrdR, found in Vibrio vulnificus (strain YJ016).